Reading from the N-terminus, the 192-residue chain is MEPWRPSPRNPMDRIDPNTFRFHFPNLLYASGRKLCYLCFQVETEDYFSCDDSDRGVFRNKVHPWARCHAEQCFLSWFRDQYPYRDEYYNVTWFLSWSPCPTCAEEVVEFLEEYRNLTLSIFTSRLYYFWDPNYQEGLCKLWDAGVQLDIMSCDDFKHCWDNFVDHKGMRFQRRNLLKDYDFLAAELQEILR.

The CMP/dCMP-type deaminase domain maps to 15-141 (IDPNTFRFHF…PNYQEGLCKL (127 aa)). His-69 provides a ligand contact to Zn(2+). Catalysis depends on Glu-71, which acts as the Proton donor. Cys-100 and Cys-103 together coordinate Zn(2+).

It belongs to the cytidine and deoxycytidylate deaminase family. As to quaternary structure, (Microbial infection) Interacts with feline foamy virus protein Bet. This interaction does not induce APOBEC3Ca degradation but prevents its dimerization and incorporation into the virion. Zn(2+) serves as cofactor.

Its subcellular location is the nucleus. It is found in the cytoplasm. The enzyme catalyses a 2'-deoxycytidine in single-stranded DNA + H2O + H(+) = a 2'-deoxyuridine in single-stranded DNA + NH4(+). In terms of biological role, DNA deaminase (cytidine deaminase) which acts as an inhibitor of retrovirus replication and retrotransposon mobility via deaminase-dependent and -independent mechanisms. Selectively targets single-stranded DNA and does not deaminate double-stranded DNA or single- or double-stranded RNA. Does not reduce infectivity of foamy feline virus, feline immunodeficiency virus or feline leukemia virus. In Felis catus (Cat), this protein is DNA dC-&gt;dU-editing enzyme APOBEC-3Ca.